The sequence spans 259 residues: NAD(P)H-quinone oxidoreductase subunit K 2 (259 aa).

The [4Fe-4S] cluster site is built by C52, C53, C117, and C148.

Belongs to the complex I 20 kDa subunit family. As to quaternary structure, NDH-1 can be composed of about 15 different subunits; different subcomplexes with different compositions have been identified which probably have different functions. [4Fe-4S] cluster serves as cofactor.

Its subcellular location is the cellular thylakoid membrane. It carries out the reaction a plastoquinone + NADH + (n+1) H(+)(in) = a plastoquinol + NAD(+) + n H(+)(out). The enzyme catalyses a plastoquinone + NADPH + (n+1) H(+)(in) = a plastoquinol + NADP(+) + n H(+)(out). In terms of biological role, NDH-1 shuttles electrons from an unknown electron donor, via FMN and iron-sulfur (Fe-S) centers, to quinones in the respiratory and/or the photosynthetic chain. The immediate electron acceptor for the enzyme in this species is believed to be plastoquinone. Couples the redox reaction to proton translocation, and thus conserves the redox energy in a proton gradient. Cyanobacterial NDH-1 also plays a role in inorganic carbon-concentration. The sequence is that of NAD(P)H-quinone oxidoreductase subunit K 2 (ndhK2) from Cyanothece sp. (strain PCC 7425 / ATCC 29141).